A 927-amino-acid polypeptide reads, in one-letter code: Valine--tRNA ligase (927 aa).

The 'HIGH' region signature appears at 45–55; that stretch reads PNVTGSLHMGH. Residues 571–575 carry the 'KMSKS' region motif; sequence KMSKS. Lys-574 contacts ATP. Residues 856–917 adopt a coiled-coil conformation; that stretch reads SLIDLAAEAA…EYRDAQDKLA (62 aa).

This sequence belongs to the class-I aminoacyl-tRNA synthetase family. ValS type 1 subfamily. Monomer.

Its subcellular location is the cytoplasm. It carries out the reaction tRNA(Val) + L-valine + ATP = L-valyl-tRNA(Val) + AMP + diphosphate. Catalyzes the attachment of valine to tRNA(Val). As ValRS can inadvertently accommodate and process structurally similar amino acids such as threonine, to avoid such errors, it has a 'posttransfer' editing activity that hydrolyzes mischarged Thr-tRNA(Val) in a tRNA-dependent manner. This chain is Valine--tRNA ligase, found in Mesorhizobium japonicum (strain LMG 29417 / CECT 9101 / MAFF 303099) (Mesorhizobium loti (strain MAFF 303099)).